Here is a 329-residue protein sequence, read N- to C-terminus: Malate dehydrogenase (329 aa).

Residue 12–18 coordinates NAD(+); sequence GAAGQIG. 2 residues coordinate substrate: arginine 95 and arginine 101. NAD(+) is bound by residues asparagine 108, glutamine 115, and 132 to 134; that span reads VGN. Residues asparagine 134 and arginine 165 each contribute to the substrate site. The Proton acceptor role is filled by histidine 190.

This sequence belongs to the LDH/MDH superfamily. MDH type 2 family.

The enzyme catalyses (S)-malate + NAD(+) = oxaloacetate + NADH + H(+). Functionally, catalyzes the reversible oxidation of malate to oxaloacetate. In Polynucleobacter necessarius subsp. necessarius (strain STIR1), this protein is Malate dehydrogenase.